The chain runs to 1103 residues: Ubiquitin carboxyl-terminal hydrolase 7 (1103 aa).

Low complexity predominate over residues 1-11 (MNHQQQQQQQQ). Residues 1 to 40 (MNHQQQQQQQQKAGEQQLSEPEDMEMEAGDTDDPPRITQN) are disordered. Positions 1-209 (MNHQQQQQQQ…APHGVAWDSK (209 aa)) are interaction with TSPYL5. S19 carries the phosphoserine modification. The segment covering 20 to 32 (EPEDMEMEAGDTD) has biased composition (acidic residues). A phosphoserine mark is found at S50 and S54. Residues 54 to 209 (SNAEEDMEDD…APHGVAWDSK (156 aa)) are interaction with p53/TP53 and MDM2. In terms of domain architecture, MATH spans 69–196 (EATFQFTVER…DDKVTFEVFV (128 aa)). The interval 71–206 (TFQFTVERFS…QADAPHGVAW (136 aa)) is necessary for nuclear localization. Positions 215 to 522 (VGLKNQGATC…NAYMLVYIRE (308 aa)) constitute a USP domain. C224 serves as the catalytic Nucleophile. H465 acts as the Proton acceptor in catalysis. The residue at position 870 (K870) is an N6-acetyllysine; alternate. K870 participates in a covalent cross-link: Glycyl lysine isopeptide (Lys-Gly) (interchain with G-Cter in SUMO2); alternate. Residue K870 forms a Glycyl lysine isopeptide (Lys-Gly) (interchain with G-Cter in ubiquitin); alternate linkage. K883 participates in a covalent cross-link: Glycyl lysine isopeptide (Lys-Gly) (interchain with G-Cter in SUMO2). A Phosphoserine modification is found at S964. N6-acetyllysine is present on residues K1085 and K1097.

This sequence belongs to the peptidase C19 family. Monomer. Homodimer. Part of a complex with DAXX, MDM2, RASSF1 and USP7. Part of a complex with DAXX, MDM2 and USP7. Interacts with MDM2; the interaction is independent of p53/TP53. Interacts with DAXX; the interaction is direct and independent of MDM2 and p53/TP53. Component of a complex composed of KMT2E, OGT and USP7; the complex stabilizes KMT2E, preventing KMT2E ubiquitination and proteasomal-mediated degradation. Interacts (via MATH domain) with KMT2E. Interacts with OGT. Interacts with FOXO4; the interaction is enhanced in presence of hydrogen peroxide and occurs independently of p53/TP53. Interacts with p53/TP53; the interaction is enhanced in response to DNA damage; the interaction is impaired by TSPYL5. Interacts with PTEN; the interaction is direct. Interacts with ATXN1 and the strength of interaction is influenced by the length of the poly-Gln region in ATXN1. A weaker interaction seen with mutants having longer poly-Gln regions. Interacts with KIAA1530/UVSSA. Interacts with MEX3C and antagonizes its ability to degrade mRNA. Interacts with DNMT1 and UHRF1. Interacts with FOXP3. Interacts (via MATH domain) with RNF220. Associated component of the Polycomb group (PcG) multiprotein PRC1-like complex. Interacts with EPOP. Interacts with OTUD4 and USP9X; the interaction is direct. Interacts with CRY2. Interacts with REST. Interacts with ERCC6. Part of a complex consisting of USP7, MAGEL2 and TRIM27; directly interacts with MAGEL2; directly interacts with TRIM27. Post-translationally, polyneddylated. In terms of processing, not sumoylated. Ubiquitinated at Lys-870. Polyubiquitinated. As to expression, strongly expressed in the testis, spleen and brain. Weakly expressed in the stomach, small intestine, skeletal muscle and uterus.

The protein localises to the nucleus. It is found in the cytoplasm. Its subcellular location is the PML body. It localises to the chromosome. It carries out the reaction Thiol-dependent hydrolysis of ester, thioester, amide, peptide and isopeptide bonds formed by the C-terminal Gly of ubiquitin (a 76-residue protein attached to proteins as an intracellular targeting signal).. Functionally, hydrolase that deubiquitinates target proteins such as ARMC5, FOXO4, DEPTOR, KAT5, p53/TP53, MDM2, ERCC6, DNMT1, UHRF1, PTEN, KMT2E/MLL5 and DAXX. Together with DAXX, prevents MDM2 self-ubiquitination and enhances the E3 ligase activity of MDM2 towards p53/TP53, thereby promoting p53/TP53 ubiquitination and proteasomal degradation. Deubiquitinates p53/TP53, preventing degradation of p53/TP53, and enhances p53/TP53-dependent transcription regulation, cell growth repression and apoptosis. Deubiquitinates p53/TP53 and MDM2 and strongly stabilizes p53/TP53 even in the presence of excess MDM2, and also induces p53/TP53-dependent cell growth repression and apoptosis. Deubiquitination of FOXO4 in presence of hydrogen peroxide is not dependent on p53/TP53 and inhibits FOXO4-induced transcriptional activity. In association with DAXX, is involved in the deubiquitination and translocation of PTEN from the nucleus to the cytoplasm, both processes that are counteracted by PML. Deubiquitinates KMT2E preventing KMT2E proteasomal-mediated degradation. Involved in cell proliferation during early embryonic development. Involved in transcription-coupled nucleotide excision repair (TC-NER) in response to UV damage: recruited to DNA damage sites following interaction with KIAA1530/UVSSA and promotes deubiquitination of ERCC6, preventing UV-induced degradation of ERCC6. Involved in maintenance of DNA methylation via its interaction with UHRF1 and DNMT1: acts by mediating deubiquitination of UHRF1 and DNMT1, preventing their degradation and promoting DNA methylation by DNMT1. Deubiquitinates alkylation repair enzyme ALKBH3. OTUD4 recruits USP7 and USP9X to stabilize ALKBH3, thereby promoting the repair of alkylated DNA lesions. Acts as a chromatin regulator via its association with the Polycomb group (PcG) multiprotein PRC1-like complex; may act by deubiquitinating components of the PRC1-like complex. Able to mediate deubiquitination of histone H2B; it is however unsure whether this activity takes place in vivo. Exhibits a preference towards 'Lys-48'-linked ubiquitin chains. Increases regulatory T-cells (Treg) suppressive capacity by deubiquitinating and stabilizing transcription factor FOXP3 which is crucial for Treg cell function. Plays a role in the maintenance of the circadian clock periodicity via deubiquitination and stabilization of the CRY1 and CRY2 proteins. Deubiquitinates REST, thereby stabilizing REST and promoting the maintenance of neural progenitor cells. Deubiquitinates SIRT7, inhibiting SIRT7 histone deacetylase activity and regulating gluconeogenesis. Involved in the regulation of WASH-dependent actin polymerization at the surface of endosomes and the regulation of endosomal protein recycling. It maintains optimal WASH complex activity and precise F-actin levels via deubiquitination of TRIM27 and WASHC1. Mediates the deubiquitination of phosphorylated DEPTOR, promoting its stability and leading to decreased mTORC1 signaling. This chain is Ubiquitin carboxyl-terminal hydrolase 7 (Usp7), found in Rattus norvegicus (Rat).